Reading from the N-terminus, the 268-residue chain is Tryptophan synthase alpha chain (268 aa).

Catalysis depends on proton acceptor residues Glu49 and Asp60.

It belongs to the TrpA family. Tetramer of two alpha and two beta chains.

It catalyses the reaction (1S,2R)-1-C-(indol-3-yl)glycerol 3-phosphate + L-serine = D-glyceraldehyde 3-phosphate + L-tryptophan + H2O. The protein operates within amino-acid biosynthesis; L-tryptophan biosynthesis; L-tryptophan from chorismate: step 5/5. Its function is as follows. The alpha subunit is responsible for the aldol cleavage of indoleglycerol phosphate to indole and glyceraldehyde 3-phosphate. The chain is Tryptophan synthase alpha chain from Pseudomonas aeruginosa (strain LESB58).